An 835-amino-acid chain; its full sequence is Probable RNA-directed RNA polymerase (835 aa).

It belongs to the totiviridae RNA-directed RNA polymerase family.

The enzyme catalyses RNA(n) + a ribonucleoside 5'-triphosphate = RNA(n+1) + diphosphate. Its function is as follows. RNA-dependent RNA polymerase which replicates the viral genome. Catalyzes the transcription of fully conservative plus-strand genomic RNAs that are extruded from the virion into the cytoplasm where they function as mRNAs for translation of viral proteins and also as substrates for encapsidation to form new virions. Once encapsidated, the positive strand is converted to dsRNA by the RNA-directed RNA polymerase. The sequence is that of Probable RNA-directed RNA polymerase from Helminthosporium victoriae virus-190S (Hv190SV).